A 171-amino-acid polypeptide reads, in one-letter code: MTRTTGAAPDRAAPAAGETPGGGGRAQVYLHAGQIAVAAEPTAIVTVLGSCVAVCLHDPVARVGGMNHFLLPLHVEREQSARFGTVAVPQLVEAVVRAGARRASLVAKVFGGASVIGAFRGARNLGDENVQLALRLLDEARIPVLDRDVGGARGRKLIFHVDDGAAWVRQL.

Low complexity predominate over residues 1–18 (MTRTTGAAPDRAAPAAGE). The interval 1–23 (MTRTTGAAPDRAAPAAGETPGGG) is disordered.

This sequence belongs to the CheD family.

The enzyme catalyses L-glutaminyl-[protein] + H2O = L-glutamyl-[protein] + NH4(+). Its function is as follows. Probably deamidates glutamine residues to glutamate on methyl-accepting chemotaxis receptors (MCPs), playing an important role in chemotaxis. The protein is Probable chemoreceptor glutamine deamidase CheD 1 of Anaeromyxobacter dehalogenans (strain 2CP-C).